A 251-amino-acid chain; its full sequence is Ubiquinone/menaquinone biosynthesis C-methyltransferase UbiE (251 aa).

S-adenosyl-L-methionine is bound by residues threonine 74, aspartate 95, 123 to 124 (NA), and serine 140.

The protein belongs to the class I-like SAM-binding methyltransferase superfamily. MenG/UbiE family.

It catalyses the reaction a 2-demethylmenaquinol + S-adenosyl-L-methionine = a menaquinol + S-adenosyl-L-homocysteine + H(+). The catalysed reaction is a 2-methoxy-6-(all-trans-polyprenyl)benzene-1,4-diol + S-adenosyl-L-methionine = a 5-methoxy-2-methyl-3-(all-trans-polyprenyl)benzene-1,4-diol + S-adenosyl-L-homocysteine + H(+). The protein operates within quinol/quinone metabolism; menaquinone biosynthesis; menaquinol from 1,4-dihydroxy-2-naphthoate: step 2/2. Its pathway is cofactor biosynthesis; ubiquinone biosynthesis. Its function is as follows. Methyltransferase required for the conversion of demethylmenaquinol (DMKH2) to menaquinol (MKH2) and the conversion of 2-polyprenyl-6-methoxy-1,4-benzoquinol (DDMQH2) to 2-polyprenyl-3-methyl-6-methoxy-1,4-benzoquinol (DMQH2). This is Ubiquinone/menaquinone biosynthesis C-methyltransferase UbiE from Escherichia coli O9:H4 (strain HS).